The following is a 2723-amino-acid chain: Zinc finger protein 292 (2723 aa).

The segment at 569-591 adopts a C2H2-type 1 zinc-finger fold; the sequence is YSCPICAKNFNSKETFVPHVTLH. The segment at 608–633 is disordered; the sequence is RLGRPPKITTTNENQKTNTVAKQEQR. Polar residues predominate over residues 615–629; that stretch reads ITTTNENQKTNTVAK. Ser-654 carries the post-translational modification Phosphoserine. 5 consecutive C2H2-type zinc fingers follow at residues 681 to 705, 722 to 744, 750 to 774, 779 to 803, and 807 to 831; these read FNCP…VKGH, VICQ…LQMH, YICI…RKEH, AKCM…EAQH, and YTCK…LDDH. The segment covering 825–834 has biased composition (basic and acidic residues); sequence EKHLDDHSTP. Residues 825–860 form a disordered region; the sequence is EKHLDDHSTPPEKVLPPEAQLNSSGDSIQPSEVNQN. Polar residues predominate over residues 844-860; it reads QLNSSGDSIQPSEVNQN. The C2H2-type 7 zinc-finger motif lies at 1098 to 1123; the sequence is FSCQVEGCTRTYNSSQSIGKHMKTAH. The residue at position 1117 (Lys-1117) is an N6-acetyllysine. Phosphoserine is present on Ser-1159. Residues 1331–1364 form a disordered region; it reads SSTNAQQSAPEKVKKDRGRGPNGKERKPKHNKRA. The segment covering 1341 to 1355 has biased composition (basic and acidic residues); that stretch reads EKVKKDRGRGPNGKE. The segment at 1375 to 1397 adopts a C2H2-type 8; degenerate zinc-finger fold; that stretch reads FICSRCYRAFTNPRSLGGHLSKR. Over residues 1588–1627 the composition is skewed to polar residues; the sequence is SFPNSGGPSQNFTSNSSRVSVISGPQNTRSSHLNKKGNSA. The tract at residues 1588–1634 is disordered; it reads SFPNSGGPSQNFTSNSSRVSVISGPQNTRSSHLNKKGNSASKRRKKV. The stretch at 1827–1854 forms a coiled coil; that stretch reads QSEVSHKEDQIQEILEGLQKLKLENDLS. C2H2-type zinc fingers lie at residues 1902 to 1927 and 1947 to 1972; these read FVCQ…GKIH and FKCV…QLVH. A disordered region spans residues 1986–2023; the sequence is RPYGRKSQSENVPASRSTQVKKQLAMTEENKKESQPAL. The segment covering 1994–2006 has biased composition (polar residues); that stretch reads SENVPASRSTQVK. N6-acetyllysine is present on Lys-2042. The interval 2074–2103 is disordered; sequence NTQTKGRKIRRHKKEKEEKKRKKPVSQSLE. A compositionally biased stretch (basic residues) spans 2078–2097; sequence KGRKIRRHKKEKEEKKRKKP. C2H2-type zinc fingers lie at residues 2114-2139, 2172-2197, 2216-2241, and 2256-2281; these read YRCV…QAVH, FRCQ…MKLH, FPCD…EADH, and YKCD…FNKH. Basic residues-rich tracts occupy residues 2285–2294 and 2312–2322; these read HKAHLIRPRR and KSKHRGTKHSR. The disordered stretch occupies residues 2285-2345; that stretch reads HKAHLIRPRR…KKKNNLENKN (61 aa). The segment at 2386–2410 adopts a C2H2-type 15 zinc-finger fold; sequence YPCMIKGCTSVVTSESNIIRHYKCH. Residues 2441–2452 are compositionally biased toward basic and acidic residues; that stretch reads QEGAKNDVKDSD. Disordered stretches follow at residues 2441-2480, 2530-2564, and 2606-2631; these read QEGA…EKDE, LKRV…VRKE, and QKKN…RKNI. Polar residues predominate over residues 2453 to 2470; sequence TCVSESNDNSRTTATVSQ. Positions 2606-2615 are enriched in basic and acidic residues; it reads QKKNTDKDHP.

It belongs to the krueppel C2H2-type zinc-finger protein family.

The protein resides in the nucleus. Functionally, may be involved in transcriptional regulation. This is Zinc finger protein 292 (ZNF292) from Homo sapiens (Human).